The primary structure comprises 100 residues: Urease subunit gamma (100 aa).

Belongs to the urease gamma subunit family. As to quaternary structure, heterotrimer of UreA (gamma), UreB (beta) and UreC (alpha) subunits. Three heterotrimers associate to form the active enzyme.

The protein resides in the cytoplasm. The enzyme catalyses urea + 2 H2O + H(+) = hydrogencarbonate + 2 NH4(+). The protein operates within nitrogen metabolism; urea degradation; CO(2) and NH(3) from urea (urease route): step 1/1. The polypeptide is Urease subunit gamma (Nocardia farcinica (strain IFM 10152)).